A 325-amino-acid chain; its full sequence is UPF0285 protein MmarC6_0247 (325 aa).

The protein belongs to the UPF0285 family.

The chain is UPF0285 protein MmarC6_0247 from Methanococcus maripaludis (strain C6 / ATCC BAA-1332).